A 164-amino-acid chain; its full sequence is SsrA-binding protein (164 aa).

The protein belongs to the SmpB family.

The protein resides in the cytoplasm. In terms of biological role, required for rescue of stalled ribosomes mediated by trans-translation. Binds to transfer-messenger RNA (tmRNA), required for stable association of tmRNA with ribosomes. tmRNA and SmpB together mimic tRNA shape, replacing the anticodon stem-loop with SmpB. tmRNA is encoded by the ssrA gene; the 2 termini fold to resemble tRNA(Ala) and it encodes a 'tag peptide', a short internal open reading frame. During trans-translation Ala-aminoacylated tmRNA acts like a tRNA, entering the A-site of stalled ribosomes, displacing the stalled mRNA. The ribosome then switches to translate the ORF on the tmRNA; the nascent peptide is terminated with the 'tag peptide' encoded by the tmRNA and targeted for degradation. The ribosome is freed to recommence translation, which seems to be the essential function of trans-translation. The protein is SsrA-binding protein of Synechococcus sp. (strain CC9311).